Reading from the N-terminus, the 209-residue chain is Large ribosomal subunit protein bL25 (209 aa).

The interval 183 to 209 (TAGERPAAEPAAAPGAAPAAGPEEAEE) is disordered. Residues 184 to 209 (AGERPAAEPAAAPGAAPAAGPEEAEE) are compositionally biased toward low complexity.

This sequence belongs to the bacterial ribosomal protein bL25 family. CTC subfamily. In terms of assembly, part of the 50S ribosomal subunit; part of the 5S rRNA/L5/L18/L25 subcomplex. Contacts the 5S rRNA. Binds to the 5S rRNA independently of L5 and L18.

In terms of biological role, this is one of the proteins that binds to the 5S RNA in the ribosome where it forms part of the central protuberance. This is Large ribosomal subunit protein bL25 from Pelotomaculum thermopropionicum (strain DSM 13744 / JCM 10971 / SI).